The following is a 256-amino-acid chain: Small ribosomal subunit protein eS1B (256 aa).

Ala-2 carries the N-acetylalanine; partial modification.

It belongs to the eukaryotic ribosomal protein eS1 family. In terms of assembly, component of the small ribosomal subunit. Mature ribosomes consist of a small (40S) and a large (60S) subunit. The 40S subunit contains about 33 different proteins and 1 molecule of RNA (18S). The 60S subunit contains about 49 different proteins and 3 molecules of RNA (25S, 5.8S and 5S).

The protein resides in the cytoplasm. The chain is Small ribosomal subunit protein eS1B from Scheffersomyces stipitis (strain ATCC 58785 / CBS 6054 / NBRC 10063 / NRRL Y-11545) (Yeast).